The sequence spans 537 residues: Probable quinate permease (537 aa).

The Cytoplasmic portion of the chain corresponds to 1 to 22 (MSILSLVEDRPTPKEVYNWKIY). Residues 23-43 (LLAAVASCTSCMIGYDSAFIG) form a helical membrane-spanning segment. Topologically, residues 44–74 (TTISLQSFKDEFDWDSMSAAHQDLVSSNIVS) are extracellular. A helical transmembrane segment spans residues 75 to 95 (LYQAGAFFGAFFAYPIGHFWG). Topologically, residues 96 to 97 (RK) are cytoplasmic. Residues 98-118 (WGLMVSALIFTLGAGIMLGTN) traverse the membrane as a helical segment. Residues 119–130 (GDRGFGLLYGGR) lie on the Extracellular side of the membrane. A helical membrane pass occupies residues 131 to 151 (VLAGLGVGAGSNITPIYISEL). Residues 152-159 (SPPAIRGR) are Cytoplasmic-facing. The chain crosses the membrane as a helical span at residues 160 to 180 (LVGVYELGWQIGGLVGFWICY). The Extracellular segment spans residues 181–193 (GVDETLPPSHKQW). Residues 194-214 (IIPFAVQLIPSGLLIIGALFL) traverse the membrane as a helical segment. Over 215–285 (KESPRWLFLR…AWTNKKILYR (71 aa)) the chain is Cytoplasmic. Residues 286-306 (LFLGSMLFFWQNGSGINAINY) form a helical membrane-spanning segment. Residues 307 to 325 (YSPTVFKSIGVTGSNTSLF) lie on the Extracellular side of the membrane. A helical transmembrane segment spans residues 326-346 (TTGIFGVVKTVVTFIWLLWLI). The Cytoplasmic segment spans residues 347-352 (DRVGRR). The chain crosses the membrane as a helical span at residues 353–373 (LLLLIGAAGGSICLWIVGAYI). The Extracellular segment spans residues 374–387 (KIARPSERENKQMD). Residues 388 to 408 (GGGIAAMFFFYLWTVFYTPSW) form a helical membrane-spanning segment. Residues 409 to 456 (NGTPWVINSEMFDPNIRSLAQACAAGSNWLWNFLISRFTPQMFAKMDY) lie on the Cytoplasmic side of the membrane. Residues 457–477 (GVYFFFASLMILSIIFVFFLI) form a helical membrane-spanning segment. Topologically, residues 478 to 537 (PETKGIPLESMDRLFETQPIWRAHGTLLKQIREDEERFRHDLEDSGFVKSTDRQVEVVDA) are extracellular.

It belongs to the major facilitator superfamily. Sugar transporter (TC 2.A.1.1) family. As to quaternary structure, interacts with creB. In terms of processing, ubiquitinated. Deubiquitinated by creB, probably to control its activity or amount.

The protein resides in the cell membrane. Integral membrane transporter that imports quinic acid to be catabolized as a carbon source. The sequence is that of Probable quinate permease (qutD) from Aspergillus flavus (strain ATCC 200026 / FGSC A1120 / IAM 13836 / NRRL 3357 / JCM 12722 / SRRC 167).